Consider the following 115-residue polypeptide: Anamorsin homolog 2 (115 aa).

The tract at residues 30-115 is disordered; the sequence is VKEATKGEDC…KVKLNLTDDI (86 aa). [2Fe-2S] cluster is bound by residues Cys39, Cys46, Cys49, and Cys51. Residues 39–51 are fe-S binding site A; that stretch reads CTTRRRACKNCTC. 4 residues coordinate [4Fe-4S] cluster: Cys77, Cys80, Cys88, and Cys91. Short sequence motifs (cx2C motif) lie at residues 77–80 and 88–91; these read CGNC and CATC. Residues 77–91 form a fe-S binding site B region; it reads CGNCAKGDAFRCATC.

Belongs to the anamorsin family. As to quaternary structure, monomer. The cofactor is [2Fe-2S] cluster. [4Fe-4S] cluster serves as cofactor.

It localises to the cytoplasm. Its subcellular location is the mitochondrion intermembrane space. Its function is as follows. Component of the cytosolic iron-sulfur (Fe-S) protein assembly (CIA) machinery. Required for the maturation of extramitochondrial Fe-S proteins. Part of an electron transfer chain functioning in an early step of cytosolic Fe-S biogenesis, facilitating the de novo assembly of a [4Fe-4S] cluster on the cytosolic Fe-S scaffold complex. Electrons are transferred from NADPH via a FAD- and FMN-containing diflavin oxidoreductase. Together with the diflavin oxidoreductase, also required for the assembly of the diferric tyrosyl radical cofactor of ribonucleotide reductase (RNR), probably by providing electrons for reduction during radical cofactor maturation in the catalytic small subunit. In Trypanosoma cruzi (strain CL Brener), this protein is Anamorsin homolog 2.